The primary structure comprises 279 residues: Nucleotide-binding protein THA_1518 (279 aa).

9–16 (GLSGAGKS) contributes to the ATP binding site. 57 to 60 (DARS) is a binding site for GTP.

Belongs to the RapZ-like family.

Displays ATPase and GTPase activities. This Thermosipho africanus (strain TCF52B) protein is Nucleotide-binding protein THA_1518.